The primary structure comprises 403 residues: MSLVNPHGREKILKPLLLSGQALQNEQERAKSMARVTLSSRETGDLIMLGIGGFTPLSGFMGYEDWKGSVEECKLADGTFWPIPITLSTTKEQADKLKIGAEVALVDEESGETMGSMTIEEKYAIDKSHECREVFKTDDPKHPGVLMVMNQGDVNLGGSVKVFSEGSFPSEFEGIYMTPAQTRKMFEDNGWSTVAAFQTRNPMHRSHEYLVKIAIEICDGVLIHQLLGKLKPGDIPADVRRDCINVLMDNYFVKGTCIQGGYPLDMRYAGPREALLHALFRQNFGCSHLIVGRDHAGVGDYYGPFDAHYIFDQIPKDALETKPLKIDWTFYCYKCDGMASMKTCPHTNEDRLNVSGTKLRKMLSEGEEVPEHFSRPEVLEVLHRYYATLTEKVDIGLQTNTGG.

The protein belongs to the sulfate adenylyltransferase family.

The enzyme catalyses sulfate + ATP + H(+) = adenosine 5'-phosphosulfate + diphosphate. Its pathway is sulfur metabolism; hydrogen sulfide biosynthesis; sulfite from sulfate: step 1/3. In Pelodictyon phaeoclathratiforme (strain DSM 5477 / BU-1), this protein is Sulfate adenylyltransferase.